The primary structure comprises 120 residues: Small ribosomal subunit protein bS6 (120 aa).

The segment covering Ser97–Thr112 has biased composition (polar residues). Residues Ser97–Asn120 form a disordered region.

Belongs to the bacterial ribosomal protein bS6 family.

Binds together with bS18 to 16S ribosomal RNA. The polypeptide is Small ribosomal subunit protein bS6 (Rickettsia bellii (strain RML369-C)).